The chain runs to 347 residues: NADH-ubiquinone oxidoreductase chain 2 (347 aa).

11 helical membrane passes run S2–I22, H25–T45, A56–F76, F96–P116, I122–F142, L149–G169, I178–Y197, I202–L219, M241–M261, L278–Y298, and I326–L346.

The protein belongs to the complex I subunit 2 family.

Its subcellular location is the mitochondrion inner membrane. The catalysed reaction is a ubiquinone + NADH + 5 H(+)(in) = a ubiquinol + NAD(+) + 4 H(+)(out). In terms of biological role, core subunit of the mitochondrial membrane respiratory chain NADH dehydrogenase (Complex I) that is believed to belong to the minimal assembly required for catalysis. Complex I functions in the transfer of electrons from NADH to the respiratory chain. The immediate electron acceptor for the enzyme is believed to be ubiquinone. This Didelphis virginiana (North American opossum) protein is NADH-ubiquinone oxidoreductase chain 2 (MT-ND2).